Reading from the N-terminus, the 432-residue chain is Gamma-glutamyl phosphate reductase (432 aa).

The protein belongs to the gamma-glutamyl phosphate reductase family.

Its subcellular location is the cytoplasm. It carries out the reaction L-glutamate 5-semialdehyde + phosphate + NADP(+) = L-glutamyl 5-phosphate + NADPH + H(+). It participates in amino-acid biosynthesis; L-proline biosynthesis; L-glutamate 5-semialdehyde from L-glutamate: step 2/2. Catalyzes the NADPH-dependent reduction of L-glutamate 5-phosphate into L-glutamate 5-semialdehyde and phosphate. The product spontaneously undergoes cyclization to form 1-pyrroline-5-carboxylate. This chain is Gamma-glutamyl phosphate reductase, found in Kineococcus radiotolerans (strain ATCC BAA-149 / DSM 14245 / SRS30216).